Consider the following 379-residue polypeptide: UDP-4-amino-4-deoxy-L-arabinose--oxoglutarate aminotransferase (379 aa).

Lysine 182 carries the N6-(pyridoxal phosphate)lysine modification.

This sequence belongs to the DegT/DnrJ/EryC1 family. ArnB subfamily. In terms of assembly, homodimer. Pyridoxal 5'-phosphate is required as a cofactor.

It carries out the reaction UDP-4-amino-4-deoxy-beta-L-arabinose + 2-oxoglutarate = UDP-beta-L-threo-pentopyranos-4-ulose + L-glutamate. It functions in the pathway nucleotide-sugar biosynthesis; UDP-4-deoxy-4-formamido-beta-L-arabinose biosynthesis; UDP-4-deoxy-4-formamido-beta-L-arabinose from UDP-alpha-D-glucuronate: step 2/3. The protein operates within bacterial outer membrane biogenesis; lipopolysaccharide biosynthesis. Functionally, catalyzes the conversion of UDP-4-keto-arabinose (UDP-Ara4O) to UDP-4-amino-4-deoxy-L-arabinose (UDP-L-Ara4N). The modified arabinose is attached to lipid A and is required for resistance to polymyxin and cationic antimicrobial peptides. This Shigella flexneri protein is UDP-4-amino-4-deoxy-L-arabinose--oxoglutarate aminotransferase.